The following is a 200-amino-acid chain: Arylesterase (200 aa).

The signal sequence occupies residues 1 to 19 (MIRLLSLVLFFCLSAASQA). The Nucleophile role is filled by Ser29. Catalysis depends on residues Asp176 and His179.

This sequence belongs to the 'GDSL' lipolytic enzyme family. As to quaternary structure, homodimer.

It carries out the reaction a phenyl acetate + H2O = a phenol + acetate + H(+). Favors the hydrolysis of several arylesters. This chain is Arylesterase, found in Vibrio mimicus.